We begin with the raw amino-acid sequence, 421 residues long: Prenyltransferase asqH2 (421 aa).

Positions 1 to 28 (MDRNSFTAYGPATGAITESGEQENDHTK) are disordered. Position 105 (Glu105) interacts with L-tryptophan. Residues Arg119, Arg272, Lys274, Tyr276, and Tyr341 each contribute to the substrate site.

Belongs to the tryptophan dimethylallyltransferase family.

It catalyses the reaction yaequinolone E + dimethylallyl diphosphate + H2O = [(1'E)-3'-hydroxy-3',7'-dimethylocta-1',6'-dien-1'-yl]-quinolinone B + diphosphate. The protein operates within secondary metabolite biosynthesis. It participates in alkaloid biosynthesis. It functions in the pathway mycotoxin biosynthesis. Prenyltransferase; part of the gene cluster that mediates the biosynthesis of the aspoquinolone mycotoxins. Within the pathway, the prenyltransferase asqH2 performs the second alkylation with DMAPP at delta(3') double bond to yield a carbenium ion intermediate, which can be attacked by H(2)O to yield a styrenyl quinolone containing a C3'-hydroxyprenyl chain. The first step of the pathway is catalyzed by the nonribosomal peptide synthetase asqK that condenses anthranilic acid and O-methyl-L-tyrosine to produce 4'-methoxycyclopeptin. 4'-methoxycyclopeptin is then converted to 4'-methoxydehydrocyclopeptin by the ketoglutarate-dependent dioxygenase asqJ. AsqJ also converts its first product 4'-methoxydehydrocyclopeptin to 4'-methoxycyclopenin. The following conversion of 4'-methoxycyclopenin into 4'-methoxyviridicatin is catalyzed by the cyclopenase asqI. 4'-methoxyviridicatin is the precursor of quinolone natural products, and is further converted to quinolinone B. The prenyltransferase asqH1 then catalyzes the canonical Friedel-Crafts alkylation of quinolinone B with dimethylallyl cation to yield dimethylallyl quinolone, which is subjected to FAD-dependent dehydrogenation by the FAD-linked oxidoreductase asqF to yield conjugated aryl diene. The delta(3') double bond then serves as the site of the second alkylation with DMAPP catalyzed by the prenyltransferase asqH2 to yield a carbenium ion intermediate, which can be attacked by H(2)O to yield a styrenyl quinolone containing a C3'-hydroxyprenyl chain. The FAD-dependent monooxygenase asqG performs epoxidation of the terminal C7'-C8' olefin. Finally, after dehydratation of the epoxide at C3 by asqC, the quinolone epoxide rearrangement protein asqO catalyzes an enzymatic 3-exo-tet cyclization to yield the cyclopropyl-THF ring system in aspoquinolone. The chain is Prenyltransferase asqH2 from Emericella nidulans (strain FGSC A4 / ATCC 38163 / CBS 112.46 / NRRL 194 / M139) (Aspergillus nidulans).